The chain runs to 453 residues: Bifunctional protein GlmU (453 aa).

The pyrophosphorylase stretch occupies residues 1–226; sequence MFAIAILAAG…IDEVSGVNDR (226 aa). Residues 7 to 10, Lys21, Gln73, and 78 to 79 contribute to the UDP-N-acetyl-alpha-D-glucosamine site; these read LAAG and GT. Asp103 lines the Mg(2+) pocket. Positions 140, 155, 170, and 224 each coordinate UDP-N-acetyl-alpha-D-glucosamine. Asn224 provides a ligand contact to Mg(2+). Residues 227-247 form a linker region; that stretch reads AQLANCENLIQQSLRNHWMSK. The segment at 248–453 is N-acetyltransferase; it reads GVSFIDPESC…NWKTREETNQ (206 aa). UDP-N-acetyl-alpha-D-glucosamine contacts are provided by Arg329 and Lys347. Residue His359 is the Proton acceptor of the active site. UDP-N-acetyl-alpha-D-glucosamine contacts are provided by Tyr362 and Asn373. Positions 376, 419, and 436 each coordinate acetyl-CoA.

It in the N-terminal section; belongs to the N-acetylglucosamine-1-phosphate uridyltransferase family. This sequence in the C-terminal section; belongs to the transferase hexapeptide repeat family. In terms of assembly, homotrimer. Mg(2+) is required as a cofactor.

The protein localises to the cytoplasm. It carries out the reaction alpha-D-glucosamine 1-phosphate + acetyl-CoA = N-acetyl-alpha-D-glucosamine 1-phosphate + CoA + H(+). It catalyses the reaction N-acetyl-alpha-D-glucosamine 1-phosphate + UTP + H(+) = UDP-N-acetyl-alpha-D-glucosamine + diphosphate. It functions in the pathway nucleotide-sugar biosynthesis; UDP-N-acetyl-alpha-D-glucosamine biosynthesis; N-acetyl-alpha-D-glucosamine 1-phosphate from alpha-D-glucosamine 6-phosphate (route II): step 2/2. It participates in nucleotide-sugar biosynthesis; UDP-N-acetyl-alpha-D-glucosamine biosynthesis; UDP-N-acetyl-alpha-D-glucosamine from N-acetyl-alpha-D-glucosamine 1-phosphate: step 1/1. The protein operates within bacterial outer membrane biogenesis; LPS lipid A biosynthesis. Catalyzes the last two sequential reactions in the de novo biosynthetic pathway for UDP-N-acetylglucosamine (UDP-GlcNAc). The C-terminal domain catalyzes the transfer of acetyl group from acetyl coenzyme A to glucosamine-1-phosphate (GlcN-1-P) to produce N-acetylglucosamine-1-phosphate (GlcNAc-1-P), which is converted into UDP-GlcNAc by the transfer of uridine 5-monophosphate (from uridine 5-triphosphate), a reaction catalyzed by the N-terminal domain. The polypeptide is Bifunctional protein GlmU (Prochlorococcus marinus (strain MIT 9211)).